Reading from the N-terminus, the 147-residue chain is Allograft inflammatory factor 1 (147 aa).

At serine 2 the chain carries N-acetylserine. Lysine 11 is modified (N6-acetyllysine). Serine 39 carries the post-translational modification Phosphoserine. 2 consecutive EF-hand domains span residues 45–80 and 81–115; these read SKLE…LGVP and KTHL…GKRS. 6 residues coordinate Ca(2+): aspartate 58, asparagine 60, asparagine 62, aspartate 64, threonine 100, and aspartate 105. The interval 128–147 is disordered; it reads AREKEKPTGPPAKKAISELP.

In terms of assembly, homodimer (Potential). Monomer. Interacts with LCP1. In terms of processing, phosphorylated on serine residues.

Its subcellular location is the cytoplasm. It is found in the cytoskeleton. The protein resides in the cell projection. The protein localises to the ruffle membrane. It localises to the phagocytic cup. Its function is as follows. Actin-binding protein that enhances membrane ruffling and RAC activation. Enhances the actin-bundling activity of LCP1. Binds calcium. Plays a role in RAC signaling and in phagocytosis. May play a role in macrophage activation and function. Promotes the proliferation of vascular smooth muscle cells and of T-lymphocytes. Enhances lymphocyte migration. Plays a role in vascular inflammation. This Macaca mulatta (Rhesus macaque) protein is Allograft inflammatory factor 1 (AIF1).